A 354-amino-acid chain; its full sequence is Sulfate/thiosulfate import ATP-binding protein CysA (354 aa).

The region spanning 3–237 is the ABC transporter domain; that stretch reads IEVRGLSKRF…PATPFVYGFL (235 aa). 35–42 contributes to the ATP binding site; it reads GPSGCGKT.

This sequence belongs to the ABC transporter superfamily. Sulfate/tungstate importer (TC 3.A.1.6) family. In terms of assembly, the complex is composed of two ATP-binding proteins (CysA), two transmembrane proteins (CysT and CysW) and a solute-binding protein (CysP).

The protein resides in the cell inner membrane. The enzyme catalyses sulfate(out) + ATP + H2O = sulfate(in) + ADP + phosphate + H(+). The catalysed reaction is thiosulfate(out) + ATP + H2O = thiosulfate(in) + ADP + phosphate + H(+). Part of the ABC transporter complex CysAWTP involved in sulfate/thiosulfate import. Responsible for energy coupling to the transport system. The sequence is that of Sulfate/thiosulfate import ATP-binding protein CysA from Bordetella pertussis (strain Tohama I / ATCC BAA-589 / NCTC 13251).